A 220-amino-acid chain; its full sequence is Probable septum site-determining protein MinC (220 aa).

The protein belongs to the MinC family. Interacts with MinD and FtsZ.

Functionally, cell division inhibitor that blocks the formation of polar Z ring septums. Rapidly oscillates between the poles of the cell to destabilize FtsZ filaments that have formed before they mature into polar Z rings. Prevents FtsZ polymerization. The chain is Probable septum site-determining protein MinC from Photobacterium profundum (strain SS9).